A 200-amino-acid chain; its full sequence is Recombination protein RecR (200 aa).

Residues 57-72 (CRQCRTLTEQELCPQC) form a C4-type zinc finger. Residues 80–175 (TQLCVVEGPM…VASRIAHGVP (96 aa)) form the Toprim domain.

Belongs to the RecR family.

In terms of biological role, may play a role in DNA repair. It seems to be involved in an RecBC-independent recombinational process of DNA repair. It may act with RecF and RecO. This is Recombination protein RecR from Pseudomonas putida (strain W619).